The chain runs to 133 residues: Small ribosomal subunit protein uS8c (133 aa).

The protein belongs to the universal ribosomal protein uS8 family. As to quaternary structure, part of the 30S ribosomal subunit.

Its subcellular location is the plastid. The protein resides in the chloroplast. One of the primary rRNA binding proteins, it binds directly to 16S rRNA central domain where it helps coordinate assembly of the platform of the 30S subunit. In Mesostigma viride (Green alga), this protein is Small ribosomal subunit protein uS8c (rps8).